The chain runs to 351 residues: Probable dual-specificity RNA methyltransferase RlmN (351 aa).

Residue Glu-97 is the Proton acceptor of the active site. The region spanning 103 to 337 (YDYGNTVCIS…VTVRKERGVD (235 aa)) is the Radical SAM core domain. A disulfide bridge links Cys-110 with Cys-342. [4Fe-4S] cluster contacts are provided by Cys-117, Cys-121, and Cys-124. Residues 166–167 (GE), Ser-198, 221–223 (SLH), and Asn-299 contribute to the S-adenosyl-L-methionine site. The S-methylcysteine intermediate role is filled by Cys-342.

This sequence belongs to the radical SAM superfamily. RlmN family. [4Fe-4S] cluster serves as cofactor.

The protein localises to the cytoplasm. It catalyses the reaction adenosine(2503) in 23S rRNA + 2 reduced [2Fe-2S]-[ferredoxin] + 2 S-adenosyl-L-methionine = 2-methyladenosine(2503) in 23S rRNA + 5'-deoxyadenosine + L-methionine + 2 oxidized [2Fe-2S]-[ferredoxin] + S-adenosyl-L-homocysteine. It carries out the reaction adenosine(37) in tRNA + 2 reduced [2Fe-2S]-[ferredoxin] + 2 S-adenosyl-L-methionine = 2-methyladenosine(37) in tRNA + 5'-deoxyadenosine + L-methionine + 2 oxidized [2Fe-2S]-[ferredoxin] + S-adenosyl-L-homocysteine. In terms of biological role, specifically methylates position 2 of adenine 2503 in 23S rRNA and position 2 of adenine 37 in tRNAs. The protein is Probable dual-specificity RNA methyltransferase RlmN of Natranaerobius thermophilus (strain ATCC BAA-1301 / DSM 18059 / JW/NM-WN-LF).